Reading from the N-terminus, the 570-residue chain is Adenine deaminase (570 aa).

It belongs to the metallo-dependent hydrolases superfamily. Adenine deaminase family. The cofactor is Mn(2+).

It catalyses the reaction adenine + H2O + H(+) = hypoxanthine + NH4(+). The polypeptide is Adenine deaminase (Oleidesulfovibrio alaskensis (strain ATCC BAA-1058 / DSM 17464 / G20) (Desulfovibrio alaskensis)).